The primary structure comprises 505 residues: MAWENVRVRVAPSPTGDPHVGTAYMALFNEIFAKRFKGKMILRIEDTDRTRSRDDYEKNIFSALQWCGIQWDEGPDVGGPCGPYRQSERTEIYKKYAELLLKTDYAYKCFATPKELEEMRAVATTLGYRGGYDRRYRYLSPEEIEARTLEGQPYTIRLKVPLTGECVLEDYCKGRVVFPWADVDDQVLIKSDGFPTYHFANVVDDHLMGITHVLRGEEWLSSTPKHLLLYEAFGWKAPTFLHMPLLLNPDGTKLSKRKNPTSIFYYRDSGYVKEAFVNFLTLMGYSMEGDEEVYSLEKLIENFDPKRIGKSGAVFDTRKLDWMNKHYLTHDGSPEHLLSRLKDWLINDEFFLKILPLCQSRITTLAEFIGFTGFFFSVLPEYTKEELLPAAISAEKAAILLYSYVKYLEKADLWVKDQFYQGSKWLSEAFQVHHKKVVIPLLYVAITGKKQGLPLFDSMELLGKPRTRMRIVHAQNLLGGVPKKVQAVIDKVLKEEDFESKTLEF.

A 'HIGH' region motif is present at residues 12–22; the sequence is PSPTGDPHVGT. The short motif at 253–257 is the 'KMSKS' region element; sequence KLSKR. ATP is bound at residue Lys-256.

The protein belongs to the class-I aminoacyl-tRNA synthetase family. Glutamate--tRNA ligase type 1 subfamily. As to quaternary structure, monomer.

The protein resides in the cytoplasm. It carries out the reaction tRNA(Glu) + L-glutamate + ATP = L-glutamyl-tRNA(Glu) + AMP + diphosphate. Catalyzes the attachment of glutamate to tRNA(Glu) in a two-step reaction: glutamate is first activated by ATP to form Glu-AMP and then transferred to the acceptor end of tRNA(Glu). This Chlamydia felis (strain Fe/C-56) (Chlamydophila felis) protein is Glutamate--tRNA ligase.